The primary structure comprises 221 residues: ATP phosphoribosyltransferase (221 aa).

This sequence belongs to the ATP phosphoribosyltransferase family. Short subfamily. In terms of assembly, heteromultimer composed of HisG and HisZ subunits.

The protein resides in the cytoplasm. It catalyses the reaction 1-(5-phospho-beta-D-ribosyl)-ATP + diphosphate = 5-phospho-alpha-D-ribose 1-diphosphate + ATP. The protein operates within amino-acid biosynthesis; L-histidine biosynthesis; L-histidine from 5-phospho-alpha-D-ribose 1-diphosphate: step 1/9. Its function is as follows. Catalyzes the condensation of ATP and 5-phosphoribose 1-diphosphate to form N'-(5'-phosphoribosyl)-ATP (PR-ATP). Has a crucial role in the pathway because the rate of histidine biosynthesis seems to be controlled primarily by regulation of HisG enzymatic activity. The protein is ATP phosphoribosyltransferase of Carboxydothermus hydrogenoformans (strain ATCC BAA-161 / DSM 6008 / Z-2901).